Consider the following 237-residue polypeptide: Carboxy-S-adenosyl-L-methionine synthase (237 aa).

S-adenosyl-L-methionine contacts are provided by residues Tyr-36, 61-63, 86-87, 112-113, Asn-127, and Arg-194; these read GAS, DN, and DI.

The protein belongs to the class I-like SAM-binding methyltransferase superfamily. Cx-SAM synthase family. Homodimer.

The enzyme catalyses prephenate + S-adenosyl-L-methionine = carboxy-S-adenosyl-L-methionine + 3-phenylpyruvate + H2O. Its function is as follows. Catalyzes the conversion of S-adenosyl-L-methionine (SAM) to carboxy-S-adenosyl-L-methionine (Cx-SAM). This chain is Carboxy-S-adenosyl-L-methionine synthase, found in Ruthia magnifica subsp. Calyptogena magnifica.